Here is a 705-residue protein sequence, read N- to C-terminus: Protein artemis (705 aa).

T380 is subject to Phosphothreonine. S385 is modified (phosphoserine). The span at 451 to 462 shows a compositional bias: acidic residues; the sequence is EESNSDSGEELE. 3 disordered regions span residues 451 to 484, 535 to 569, and 638 to 675; these read EESNSDSGEELETPPPSLQGGLGPSTLVQQNADP, PKLCSDSDGDSTHISSQNSSQSTHITDQGSQGWDS, and TLSGRKSPPEKTLLSSTRADSQSSSDFEIPSTPEAELP. The segment covering 546–559 has biased composition (low complexity); sequence THISSQNSSQSTHI. Residues 560–569 show a composition bias toward polar residues; it reads TDQGSQGWDS. Residues 652-662 show a composition bias toward low complexity; it reads SSTRADSQSSS. S658 bears the Phosphoserine; by ATM mark.

It belongs to the DNA repair metallo-beta-lactamase (DRMBL) family. Interacts with LIG4; the interaction is direct. Interacts with ATM. Interacts with BRCA1. Interacts with PRKDC. Interacts with TP53BP1. Also exhibits ATM- and phosphorylation-dependent interaction with the MRN complex, composed of MRE11, RAD50, and NBN. In terms of processing, phosphorylation on undefined residues by PRKDC may stimulate endonucleolytic activity on 5' and 3' hairpins and overhangs. PRKDC must remain present, even after phosphorylation, for efficient hairpin opening. Also phosphorylated by ATM in response to ionizing radiation (IR) and by ATR in response to ultraviolet (UV) radiation.

It localises to the nucleus. Its function is as follows. Required for V(D)J recombination, the process by which exons encoding the antigen-binding domains of immunoglobulins and T-cell receptor proteins are assembled from individual V, (D), and J gene segments. V(D)J recombination is initiated by the lymphoid specific RAG endonuclease complex, which generates site specific DNA double strand breaks (DSBs). These DSBs present two types of DNA end structures: hairpin sealed coding ends and phosphorylated blunt signal ends. These ends are independently repaired by the non homologous end joining (NHEJ) pathway to form coding and signal joints respectively. This protein likely exhibits single-strand specific 5'-3' exonuclease activity in isolation, and may acquire endonucleolytic activity on 5' and 3' hairpins and overhangs when in a complex with PRKDC. The latter activity may be required specifically for the resolution of closed hairpins prior to the formation of the coding joint. May also be required for the repair of complex DSBs induced by ionizing radiation, which require substantial end-processing prior to religation by NHEJ. This is Protein artemis (Dclre1c) from Mus musculus (Mouse).